A 331-amino-acid polypeptide reads, in one-letter code: Thioredoxin-like fold domain-containing protein MRL7, chloroplastic (331 aa).

The N-terminal 59 residues, 1 to 59 (MSFFAVACSAPRSSMLLTGLNSSFSDMHRSPLFVFPVTISSRSVKRFAAVSSDSVLDPE), are a transit peptide targeting the chloroplast. Disordered stretches follow at residues 52 to 105 (SDSV…ADAV) and 141 to 160 (GVDE…EDPD). Positions 142–160 (VDEEEEEEEEMVVEEEDPD) are enriched in acidic residues.

In terms of assembly, component of the transcriptionally active chromosome (TAC) complexes. Interacts with FSD2 and PRDA1. Interacts with FSD3 and CITRX/TRXZ. Binds to PTAC12/HMR/PAP5. Expressed in leaves, shoots, stems, cauline leaves, flower buds, flowers and siliques.

It localises to the plastid. The protein resides in the chloroplast. Its subcellular location is the chloroplast stroma. It is found in the chloroplast nucleoid. The protein localises to the nucleus. Functionally, plays an essential role in early steps of chloroplast development. Involved in the regulation of plastid gene expression. May positively regulate plastid-encoded RNA polymerase (PEP) activity through binding to FSD3 and CITRX/TRXZ. Involved in redox-mediated regulation of chloroplast development. Possesses disulfide reductase activity in vitro. Required for the proper function of the plastid transcriptional machinery and protein accumulation in thylakoid membranes. May function as molecular chaperone to ensure proper organization of the nucleoids in chloroplasts. May mediate some aspect of thylakoid structure or function that controls non-photochemical quenching (NPQ). Participates in the early light signaling events of photobody biogenesis in chloroplasts. May mediate the degradation of two repressors of chloroplast biogenesis, PIF1 and PIF3 in nucleus. Collaboratively with PTAC12/HMR/PAP5, involved in the regulation of thermoresponsive responses via the stabilization of PIF4 in the daytime to initiate thermomorphogenesis. The sequence is that of Thioredoxin-like fold domain-containing protein MRL7, chloroplastic from Arabidopsis thaliana (Mouse-ear cress).